The sequence spans 306 residues: Porphobilinogen deaminase (306 aa).

Residue Cys244 is modified to S-(dipyrrolylmethanemethyl)cysteine.

The protein belongs to the HMBS family. As to quaternary structure, monomer. Dipyrromethane serves as cofactor.

It carries out the reaction 4 porphobilinogen + H2O = hydroxymethylbilane + 4 NH4(+). It participates in porphyrin-containing compound metabolism; protoporphyrin-IX biosynthesis; coproporphyrinogen-III from 5-aminolevulinate: step 2/4. Functionally, tetrapolymerization of the monopyrrole PBG into the hydroxymethylbilane pre-uroporphyrinogen in several discrete steps. This is Porphobilinogen deaminase from Streptococcus sanguinis (strain SK36).